Consider the following 477-residue polypeptide: 2-(3-amino-3-carboxypropyl)histidine synthase subunit 2 (477 aa).

Residues cysteine 88, cysteine 109, and cysteine 328 each contribute to the [4Fe-4S] cluster site.

This sequence belongs to the DPH1/DPH2 family. DPH2 subfamily. In terms of assembly, component of the 2-(3-amino-3-carboxypropyl)histidine synthase complex composed of DPH1, DPH2, DPH3 and a NADH-dependent reductase. Requires [4Fe-4S] cluster as cofactor.

The protein operates within protein modification; peptidyl-diphthamide biosynthesis. In terms of biological role, required for the first step of diphthamide biosynthesis, a post-translational modification of histidine which occurs in elongation factor 2. DPH1 and DPH2 transfer a 3-amino-3-carboxypropyl (ACP) group from S-adenosyl-L-methionine (SAM) to a histidine residue, the reaction is assisted by a reduction system comprising DPH3 and a NADH-dependent reductase. Facilitates the reduction of the catalytic iron-sulfur cluster found in the DPH1 subunit. The sequence is that of 2-(3-amino-3-carboxypropyl)histidine synthase subunit 2 (DPH2) from Gallus gallus (Chicken).